A 208-amino-acid chain; its full sequence is Microtubule-associated protein Jupiter (208 aa).

Disordered stretches follow at residues 24–43 (RPPG…QTPR) and 82–106 (RGQK…PGKN). Residue Ser-30 is modified to Phosphoserine. Position 41 is a phosphothreonine (Thr-41). A compositionally biased stretch (basic and acidic residues) spans 82-93 (RGQKTVDSHSRL). A phosphothreonine mark is found at Thr-98 and Thr-102. Phosphoserine is present on residues Ser-111, Ser-139, and Ser-150. The segment at 132-208 (HYNGKSGSVS…PPGGYSSGLW (77 aa)) is disordered. Residues 137–150 (SGSVSSASSSVSSS) show a composition bias toward low complexity. Polar residues-rich tracts occupy residues 151 to 165 (TENL…SEGN) and 178 to 189 (EYSQRQESSNGG).

The protein belongs to the MAP Jupiter family. As to expression, ubiquitous expression throughout development. Expressed during cell division in the syncytial embryo. Expressed in developing photoreceptors of the eye imaginal disk of the third larval stage. In adults, highly expressed in neurons of the brain, concentrated in axons. In the adult ovaries, expression accumulates in the germarium and the polar follicular cells as well as in the oocyte along the microtubule network.

It localises to the nucleus. Its subcellular location is the cytoplasm. The protein localises to the cytoskeleton. It is found in the spindle. Functionally, binds to all microtubule populations. In Drosophila melanogaster (Fruit fly), this protein is Microtubule-associated protein Jupiter.